The following is a 245-amino-acid chain: Polyhedrin (245 aa).

It belongs to the polyhedrin family.

Its function is as follows. Major component of the virus occlusion bodies, which are large proteinaceous structures (polyhedra), that protect the virus from the outside environment for extended periods until they are ingested by insect larvae. The sequence is that of Polyhedrin (PH) from Lepidoptera (butterflies and moths).